The following is a 354-amino-acid chain: tRNA N6-adenosine threonylcarbamoyltransferase (354 aa).

Positions 115 and 119 each coordinate Fe cation. Residues 138–142, aspartate 171, glycine 184, and asparagine 276 each bind substrate; that span reads LVSGG. Aspartate 304 lines the Fe cation pocket.

Belongs to the KAE1 / TsaD family. The cofactor is Fe(2+).

The protein resides in the cytoplasm. It carries out the reaction L-threonylcarbamoyladenylate + adenosine(37) in tRNA = N(6)-L-threonylcarbamoyladenosine(37) in tRNA + AMP + H(+). Its function is as follows. Required for the formation of a threonylcarbamoyl group on adenosine at position 37 (t(6)A37) in tRNAs that read codons beginning with adenine. Is involved in the transfer of the threonylcarbamoyl moiety of threonylcarbamoyl-AMP (TC-AMP) to the N6 group of A37, together with TsaE and TsaB. TsaD likely plays a direct catalytic role in this reaction. This chain is tRNA N6-adenosine threonylcarbamoyltransferase, found in Xanthomonas oryzae pv. oryzae (strain MAFF 311018).